The primary structure comprises 146 residues: Prolactin-inducible protein homolog (146 aa).

An N-terminal signal peptide occupies residues 1–26 (MQGLSFTFSAVTLFLVLCLQLGIIES). At Gln27 the chain carries Pyrrolidone carboxylic acid. 2 cysteine pairs are disulfide-bonded: Cys65/Cys91 and Cys89/Cys123.

This sequence belongs to the PIP family. As to quaternary structure, monomer. Interacts with AZGP1. Lacrimal and submaxillary glands.

The protein resides in the secreted. The polypeptide is Prolactin-inducible protein homolog (Pip) (Mus musculus (Mouse)).